The primary structure comprises 362 residues: MSFNTFGHLFRVTTFGESHGVAIGCVVDGCPPLIPLTEADIQGDLDRRRPGQSRFTTQRQEADQVKILSGVMVHPETGVQVTTGTPIALLIENTDQRSKDYSDIQNKYRPGHADFTYEAKYGIRDYRGGGRSSARETATRVAAGAIARKVIAGMTVRGALVQIGPHKIDRDKWDWDEIGNNPFFCPDKDKAAFYADYLDGIRKSGSSIGAVVEIVAEGVPAGLGAPIYAKLDGDLAAALMSINAVKGVEIGDGFASAELTGEQNADEMRTGNHGPAFLSNHAGGILGGISTGQPVVARFAVKPTSSILTPRKTVDRTGHDTEILTKGRHDPCVGIRAVPVGEAMVACVLADHLLRHRGQVGG.

NADP(+)-binding residues include Arg48 and Arg54. FMN contacts are provided by residues 131-133 (RSS), 243-244 (NA), Gly287, 302-306 (KPTSS), and Arg328.

Belongs to the chorismate synthase family. As to quaternary structure, homotetramer. It depends on FMNH2 as a cofactor.

It carries out the reaction 5-O-(1-carboxyvinyl)-3-phosphoshikimate = chorismate + phosphate. Its pathway is metabolic intermediate biosynthesis; chorismate biosynthesis; chorismate from D-erythrose 4-phosphate and phosphoenolpyruvate: step 7/7. In terms of biological role, catalyzes the anti-1,4-elimination of the C-3 phosphate and the C-6 proR hydrogen from 5-enolpyruvylshikimate-3-phosphate (EPSP) to yield chorismate, which is the branch point compound that serves as the starting substrate for the three terminal pathways of aromatic amino acid biosynthesis. This reaction introduces a second double bond into the aromatic ring system. The polypeptide is Chorismate synthase (Rhodopseudomonas palustris (strain TIE-1)).